The primary structure comprises 313 residues: Ribosomal RNA small subunit methyltransferase H (313 aa).

Residues 35–37, aspartate 55, phenylalanine 79, aspartate 101, and glutamine 108 each bind S-adenosyl-L-methionine; that span reads GGH.

Belongs to the methyltransferase superfamily. RsmH family.

The protein resides in the cytoplasm. The enzyme catalyses cytidine(1402) in 16S rRNA + S-adenosyl-L-methionine = N(4)-methylcytidine(1402) in 16S rRNA + S-adenosyl-L-homocysteine + H(+). Functionally, specifically methylates the N4 position of cytidine in position 1402 (C1402) of 16S rRNA. This Escherichia coli O127:H6 (strain E2348/69 / EPEC) protein is Ribosomal RNA small subunit methyltransferase H.